Reading from the N-terminus, the 231-residue chain is Large ribosomal subunit protein uL1 (231 aa).

This sequence belongs to the universal ribosomal protein uL1 family. In terms of assembly, part of the 50S ribosomal subunit.

Binds directly to 23S rRNA. The L1 stalk is quite mobile in the ribosome, and is involved in E site tRNA release. Its function is as follows. Protein L1 is also a translational repressor protein, it controls the translation of the L11 operon by binding to its mRNA. In Clostridium kluyveri (strain NBRC 12016), this protein is Large ribosomal subunit protein uL1.